The primary structure comprises 78 residues: Acyl carrier protein BQ2027_MB0103 (78 aa).

Positions 1-78 constitute a Carrier domain; it reads MRDRILAAVC…ELEAVCTEFG (78 aa). Residue Ser-35 is modified to O-(pantetheine 4'-phosphoryl)serine.

The protein belongs to the acyl carrier protein (ACP) family. The cofactor is pantetheine 4'-phosphate.

It participates in lipid metabolism; fatty acid metabolism. Functionally, acyl-carrier protein (ACP) involved in the biosynthesis of a unique class of isonitrile lipopeptides (INLPs) that seem to play a role in metal acquisition. Is the dedicated ACP for the loading of activated acyl groups catalyzed by FadD10. The protein is Acyl carrier protein BQ2027_MB0103 of Mycobacterium bovis (strain ATCC BAA-935 / AF2122/97).